The primary structure comprises 412 residues: Putative competence-damage inducible protein (412 aa).

It belongs to the CinA family.

This is Putative competence-damage inducible protein from Bacillus thuringiensis (strain Al Hakam).